Reading from the N-terminus, the 336-residue chain is Ketoreductase adrE (336 aa).

Tyr-171 contributes to the NADP(+) binding site.

This sequence belongs to the NAD(P)-dependent epimerase/dehydratase family. Dihydroflavonol-4-reductase subfamily.

The protein operates within secondary metabolite biosynthesis; terpenoid biosynthesis. Functionally, ketoreductase; part of the gene cluster that mediates the biosynthesis of andrastins, meroterpenoid compounds that exhibit inhibitory activity against ras farnesyltransferase, suggesting that they could be promising leads for antitumor agents. The first step of the pathway is the synthesis of 3,5-dimethylorsellinic acid (DMOA) by the polyketide synthase adrD via condensation of one acetyl-CoA starter unit with 3 malonyl-CoA units and 2 methylations. DMAO is then converted to farnesyl-DMAO by the prenyltransferase adrG. The methyltransferase adrK catalyzes the methylation of the carboxyl group of farnesyl-DMAO to farnesyl-DMAO methyl ester which is further converted to epoxyfarnesyl-DMAO methyl ester by the FAD-dependent monooxygenase adrH. The terpene cyclase adrI then catalyzes the carbon skeletal rearrangement to generate the andrastin E, the first compound in the pathway having the andrastin scaffold, with the tetracyclic ring system. The post-cyclization tailoring enzymes adrF, adrE, adrJ, and adrA, are involved in the conversion of andrastin E into andrastin A. The short chain dehydrogenase adrF is responsible for the oxidation of the C-3 a hydroxyl group of andrastin E to yield the corresponding ketone, andrastin D. The ketoreductase adrE stereoselectively reduces the carbonyl moiety to reverse the stereochemistry of the C-3 position to yield andrastin F. The acetyltransferase adrJ is the acetyltransferase that attaches the acetyl group to the C-3 hydroxyl group of andrastin F to yield andrastin C. Finally, the cytochrome P450 monooxygenase adrA catalyzes two sequential oxidation reactions of the C-23 methyl group, to generate the corresponding alcohol andrastin B, and aldehyde andrastin A. This is Ketoreductase adrE from Penicillium rubens (strain ATCC 28089 / DSM 1075 / NRRL 1951 / Wisconsin 54-1255) (Penicillium chrysogenum).